We begin with the raw amino-acid sequence, 401 residues long: Aspartokinase (401 aa).

This sequence belongs to the aspartokinase family.

The catalysed reaction is L-aspartate + ATP = 4-phospho-L-aspartate + ADP. It functions in the pathway amino-acid biosynthesis; L-lysine biosynthesis via DAP pathway; (S)-tetrahydrodipicolinate from L-aspartate: step 1/4. Its pathway is amino-acid biosynthesis; L-methionine biosynthesis via de novo pathway; L-homoserine from L-aspartate: step 1/3. It participates in amino-acid biosynthesis; L-threonine biosynthesis; L-threonine from L-aspartate: step 1/5. The protein is Aspartokinase (lysC) of Rickettsia conorii (strain ATCC VR-613 / Malish 7).